The following is a 328-amino-acid chain: Small neutral protease regulatory protein (328 aa).

Residues 1 to 60 form the HTH lysR-type domain; sequence MELEVRHLRALCAIADAGSLHRAARRLGVAQPTLSTQLTRIEQALGGPLFTRERTGCRPT. A DNA-binding region (H-T-H motif) is located at residues 20–39; that stretch reads LHRAARRLGVAQPTLSTQLT.

This sequence belongs to the LysR transcriptional regulatory family.

Functionally, transcriptional trans-activator of the gene (mprA) for the small neutral protease. In Streptomyces coelicolor (strain ATCC BAA-471 / A3(2) / M145), this protein is Small neutral protease regulatory protein (mprR).